The following is a 126-amino-acid chain: Glycine cleavage system H protein (126 aa).

One can recognise a Lipoyl-binding domain in the interval 22 to 104 (VAYVGITDYA…YGEGWLIKMK (83 aa)). Residue K63 is modified to N6-lipoyllysine.

Belongs to the GcvH family. The glycine cleavage system is composed of four proteins: P, T, L and H. (R)-lipoate serves as cofactor.

The glycine cleavage system catalyzes the degradation of glycine. The H protein shuttles the methylamine group of glycine from the P protein to the T protein. This is Glycine cleavage system H protein from Bacteroides fragilis (strain YCH46).